A 405-amino-acid polypeptide reads, in one-letter code: Cystathionine gamma-lyase (405 aa).

Arginine 62, tyrosine 114, and arginine 119 together coordinate substrate. Lysine 212 carries the N6-(pyridoxal phosphate)lysine modification. Glutamate 339 contributes to the substrate binding site.

The protein belongs to the trans-sulfuration enzymes family. As to quaternary structure, homotetramer. Interacts with CALM in a calcium-dependent manner. It depends on pyridoxal 5'-phosphate as a cofactor. Highly expressed in liver. Also in muscle and lower expression in most tissues except heart, pituitary gland, spleen, thymus, and vascular tissue, where it is hardly detected.

It is found in the cytoplasm. The catalysed reaction is L,L-cystathionine + H2O = 2-oxobutanoate + L-cysteine + NH4(+). It catalyses the reaction L-cysteine + H2O = hydrogen sulfide + pyruvate + NH4(+) + H(+). The enzyme catalyses L-homocysteine + H2O = 2-oxobutanoate + hydrogen sulfide + NH4(+) + H(+). It carries out the reaction L-homoserine = 2-oxobutanoate + NH4(+). The catalysed reaction is L-selenocystathionine + H2O = L-selenocysteine + 2-oxobutanoate + NH4(+). The protein operates within amino-acid biosynthesis; L-cysteine biosynthesis; L-cysteine from L-homocysteine and L-serine: step 2/2. With respect to regulation, inhibited by propargylglycine, trifluoroalanine and aminoethoxyvinylglycine. In terms of biological role, catalyzes the last step in the trans-sulfuration pathway from L-methionine to L-cysteine in a pyridoxal-5'-phosphate (PLP)-dependent manner, which consists on cleaving the L,L-cystathionine molecule into L-cysteine, ammonia and 2-oxobutanoate. Part of the L-cysteine derived from the trans-sulfuration pathway is utilized for biosynthesis of the ubiquitous antioxidant glutathione. Besides its role in the conversion of L-cystathionine into L-cysteine, it utilizes L-cysteine and L-homocysteine as substrates (at much lower rates than L,L-cystathionine) to produce the endogenous gaseous signaling molecule hydrogen sulfide (H2S). In vitro, it converts two L-cysteine molecules into lanthionine and H2S, also two L-homocysteine molecules to homolanthionine and H2S, which can be particularly relevant under conditions of severe hyperhomocysteinemia (which is a risk factor for cardiovascular disease, diabetes, and Alzheimer's disease). Lanthionine and homolanthionine are structural homologs of L,L-cystathionine that differ by the absence or presence of an extra methylene group, respectively. Acts as a cysteine-protein sulfhydrase by mediating sulfhydration of target proteins: sulfhydration consists of converting -SH groups into -SSH on specific cysteine residues of target proteins such as GAPDH, PTPN1 and NF-kappa-B subunit RELA, thereby regulating their function. By generating the gasotransmitter H2S, it participates in a number of physiological processes such as vasodilation, bone protection, and inflammation. Plays an essential role in myogenesis by contributing to the biogenesis of H2S in skeletal muscle tissue. Can also accept homoserine as substrate. Catalyzes the elimination of selenocystathionine (which can be derived from the diet) to yield selenocysteine, ammonia and 2-oxobutanoate. In Homo sapiens (Human), this protein is Cystathionine gamma-lyase (CTH).